Consider the following 466-residue polypeptide: 3-isopropylmalate dehydratase large subunit (466 aa).

Residues Cys-349, Cys-410, and Cys-413 each contribute to the [4Fe-4S] cluster site.

The protein belongs to the aconitase/IPM isomerase family. LeuC type 1 subfamily. As to quaternary structure, heterodimer of LeuC and LeuD. [4Fe-4S] cluster is required as a cofactor.

It catalyses the reaction (2R,3S)-3-isopropylmalate = (2S)-2-isopropylmalate. It participates in amino-acid biosynthesis; L-leucine biosynthesis; L-leucine from 3-methyl-2-oxobutanoate: step 2/4. Functionally, catalyzes the isomerization between 2-isopropylmalate and 3-isopropylmalate, via the formation of 2-isopropylmaleate. This Vesicomyosocius okutanii subsp. Calyptogena okutanii (strain HA) protein is 3-isopropylmalate dehydratase large subunit.